A 345-amino-acid polypeptide reads, in one-letter code: Nuclear distribution protein nudE-like 1 (345 aa).

Positions 27 to 190 (KQTFQEARDE…LAVRERQQEV (164 aa)) form a coiled coil. Residues 56–166 (VQAEQRNRDL…LDEKESLLVS (111 aa)) are self-association. Residues 64–189 (DLQADNQRLK…ELAVRERQQE (126 aa)) are interaction with KATNB1. The segment at 114 to 133 (YVRELEQANDDLERAKRATI) is required for interaction with PAFAH1B1. The interaction with CENPF stretch occupies residues 175–345 (RDLRQELAVR…SAPGMLPLSV (171 aa)). The interval 189–256 (EVTRKSAPSS…SARISALNIV (68 aa)) is interaction with YWHAE. The segment at 191–345 (TRKSAPSSPT…SAPGMLPLSV (155 aa)) is interaction with NEFL. The segment at 195–256 (APSSPTLDCE…SARISALNIV (62 aa)) is interaction with KATNA1. Ser215 carries the phosphoserine modification. Residues 217 to 240 (PATPVGKGTENSFPSPKAIPNGFG) form a disordered region. Thr219 carries the post-translational modification Phosphothreonine; by CDK1 and MAPK1. The segment at 227-278 (NSFPSPKAIPNGFGTSPLTPSARISALNIVGDLLRKVGALESKLAACRNFAK) is interaction with DISC1. Ser231 carries the post-translational modification Phosphoserine. Ser242 carries the post-translational modification Phosphoserine; by CDK1. Position 245 is a phosphothreonine; by CDK1 and MAPK1 (Thr245). The required for localization to the centrosome and interaction with dynein, dynactin, tubulin gamma, PCM1 and PCNT stretch occupies residues 256–291 (VGDLLRKVGALESKLAACRNFAKDQASRKSYISGNV). Residue Cys273 is the site of S-palmitoyl cysteine; by ZDHHC2, ZDHHC3 and ZDHHC7 attachment. Residues 316 to 345 (AVNGFDPAPPPPGLGSSRPLSAPGMLPLSV) are disordered. A compositionally biased stretch (low complexity) spans 329–339 (LGSSRPLSAPG). Ser344 carries the phosphoserine modification.

The protein belongs to the nudE family. As to quaternary structure, self-associates. Interacts with DISC1, dynein, dynactin, tubulin gamma, KATNA1, KATNB1, microtubules, PAFAH1B1, PCM1, PCNT, and YWHAE. Interacts directly with NEFL and indirectly with NEFH. Interacts (via C-terminus) with CENPF. Interacts with ZNF365. Interacts with PLEKHM1 (via N- and C-terminus). Interacts with GTP-bound RAB9A; the interaction may lead to RAB9A-dynein motor tethering. In terms of processing, phosphorylated in mitosis. Can be phosphorylated by CDK1, CDK5 and MAPK1. Phosphorylation by CDK5 promotes interaction with KATNA1 and YWHAE. Palmitoylation at Cys-273 reduces affinity for dynein. In terms of tissue distribution, expressed at low levels in heart, hypothalamus, liver, lung, spleen and stomach. Expressed at higher levels in testis and brain. Within the brain, expressed in cerebellum, cerebral stem, cortex and striatum.

The protein localises to the cytoplasm. It is found in the cytoskeleton. It localises to the microtubule organizing center. Its subcellular location is the centrosome. The protein resides in the chromosome. The protein localises to the centromere. It is found in the kinetochore. It localises to the spindle. Required for organization of the cellular microtubule array and microtubule anchoring at the centrosome. May regulate microtubule organization at least in part by targeting the microtubule severing protein KATNA1 to the centrosome. Also positively regulates the activity of the minus-end directed microtubule motor protein dynein. May enhance dynein-mediated microtubule sliding by targeting dynein to the microtubule plus ends. Required for several dynein- and microtubule-dependent processes such as the maintenance of Golgi integrity, the centripetal motion of secretory vesicles and the coupling of the nucleus and centrosome. Also required during brain development for the migration of newly formed neurons from the ventricular/subventricular zone toward the cortical plate. Plays a role, together with DISC1, in the regulation of neurite outgrowth. Required for mitosis in some cell types but appears to be dispensible for mitosis in cortical neuronal progenitors, which instead requires NDE1. Facilitates the polymerization of neurofilaments from the individual subunits NEFH and NEFL. Positively regulates lysosome peripheral distribution and ruffled border formation in osteoclasts. Plays a role, together with DISC1, in the regulation of neurite outgrowth. May act as a RAB9A/B effector that tethers RAB9-associated late endosomes to the dynein motor for their retrograde transport to the trans-Golgi network. This chain is Nuclear distribution protein nudE-like 1 (NDEL1), found in Oryctolagus cuniculus (Rabbit).